Consider the following 123-residue polypeptide: Ribonuclease P protein component (123 aa).

This sequence belongs to the RnpA family. In terms of assembly, consists of a catalytic RNA component (M1 or rnpB) and a protein subunit.

The enzyme catalyses Endonucleolytic cleavage of RNA, removing 5'-extranucleotides from tRNA precursor.. Its function is as follows. RNaseP catalyzes the removal of the 5'-leader sequence from pre-tRNA to produce the mature 5'-terminus. It can also cleave other RNA substrates such as 4.5S RNA. The protein component plays an auxiliary but essential role in vivo by binding to the 5'-leader sequence and broadening the substrate specificity of the ribozyme. The chain is Ribonuclease P protein component from Streptomyces bikiniensis.